We begin with the raw amino-acid sequence, 523 residues long: MHYSQMRWMFFCLTALLHGSFIVNAAKILVYCPSISKSHVLLCSKYADLLHNAGHDTVLFIPSYSKLLDNYDGAKHAKVWRLHNVTEAYDTKLGTLANVMENSHIGFIDRLTFDADFWIDMCADLLGKLPEMQHIIDYKFDLVIYNEIDPCTPAIVRLFNIPKTVLLSSEAIMDKVAWNLGLPTLPSYVPSVEENPNHDRMSFFERMSNVYKFFQSIVVHYLQDIHVLNLFRKEVSSDFPSIAEIIRNVSLVLVNTDEIFDLPRSYSSKFVYVGMLEAGKDENVTLPKKQDDYFKKGKSGSVFVSFGTVTPFRSLPERIQLSILNAIQKLPDYHFVVKTTADDESSAQFFSTVQNVDLVDWVPQKAVLRHANLKLFVSHGGMNSVLETMYYGVPMVIMPVFTDQFRNGRNVERRGAGKMVLRETVVKETFFDAIHSVLEEKSYSSSVKRISHLMKNKPFTSEERVTKWIDFVLKYETSEHFDLESNNLSIIEHNHLDLFFYLCIISLLNFVVYRKIFKRKSQS.

Residues 1–25 form the signal peptide; it reads MHYSQMRWMFFCLTALLHGSFIVNA. Asn-84, Asn-248, Asn-283, and Asn-487 each carry an N-linked (GlcNAc...) asparagine glycan. Residues 490–508 form a helical membrane-spanning segment; the sequence is IIEHNHLDLFFYLCIISLL.

The protein belongs to the UDP-glycosyltransferase family.

The protein resides in the membrane. The enzyme catalyses glucuronate acceptor + UDP-alpha-D-glucuronate = acceptor beta-D-glucuronoside + UDP + H(+). The sequence is that of Putative UDP-glucuronosyltransferase ugt-50 (ugt-50) from Caenorhabditis elegans.